We begin with the raw amino-acid sequence, 281 residues long: 2-dehydro-3-deoxyphosphooctonate aldolase (281 aa).

The protein belongs to the KdsA family.

The protein localises to the cytoplasm. It catalyses the reaction D-arabinose 5-phosphate + phosphoenolpyruvate + H2O = 3-deoxy-alpha-D-manno-2-octulosonate-8-phosphate + phosphate. Its pathway is carbohydrate biosynthesis; 3-deoxy-D-manno-octulosonate biosynthesis; 3-deoxy-D-manno-octulosonate from D-ribulose 5-phosphate: step 2/3. The protein operates within bacterial outer membrane biogenesis; lipopolysaccharide biosynthesis. This Hahella chejuensis (strain KCTC 2396) protein is 2-dehydro-3-deoxyphosphooctonate aldolase.